A 239-amino-acid chain; its full sequence is Putative CCR4-associated factor 1 homolog 8 (239 aa).

Positions 17, 19, 133, and 204 each coordinate a divalent metal cation.

It belongs to the CAF1 family. As to quaternary structure, component of the CCR4-NOT complex, at least composed of CRR4 and CAF1 proteins. A divalent metal cation is required as a cofactor.

It is found in the nucleus. It localises to the cytoplasm. The enzyme catalyses Exonucleolytic cleavage of poly(A) to 5'-AMP.. Functionally, ubiquitous transcription factor required for a diverse set of processes. It is a component of the CCR4 complex involved in the control of gene expression. The polypeptide is Putative CCR4-associated factor 1 homolog 8 (CAF1-8) (Arabidopsis thaliana (Mouse-ear cress)).